Consider the following 176-residue polypeptide: Inorganic pyrophosphatase (176 aa).

K30, R44, and Y56 together coordinate substrate. Mg(2+)-binding residues include D66, D71, and D103. Residue Y142 coordinates substrate.

The protein belongs to the PPase family. In terms of assembly, homohexamer. Requires Mg(2+) as cofactor.

The protein resides in the cytoplasm. It catalyses the reaction diphosphate + H2O = 2 phosphate + H(+). Catalyzes the hydrolysis of inorganic pyrophosphate (PPi) forming two phosphate ions. The polypeptide is Inorganic pyrophosphatase (Vibrio cholerae serotype O1 (strain ATCC 39315 / El Tor Inaba N16961)).